A 100-amino-acid polypeptide reads, in one-letter code: Urease subunit gamma (100 aa).

This sequence belongs to the urease gamma subunit family. Heterotrimer of UreA (gamma), UreB (beta) and UreC (alpha) subunits. Three heterotrimers associate to form the active enzyme.

It is found in the cytoplasm. It carries out the reaction urea + 2 H2O + H(+) = hydrogencarbonate + 2 NH4(+). It participates in nitrogen metabolism; urea degradation; CO(2) and NH(3) from urea (urease route): step 1/1. This is Urease subunit gamma from Proteus hauseri.